We begin with the raw amino-acid sequence, 252 residues long: Trans-aconitate 2-methyltransferase (252 aa).

It belongs to the methyltransferase superfamily. Tam family.

Its subcellular location is the cytoplasm. The catalysed reaction is trans-aconitate + S-adenosyl-L-methionine = (E)-3-(methoxycarbonyl)pent-2-enedioate + S-adenosyl-L-homocysteine. Functionally, catalyzes the S-adenosylmethionine monomethyl esterification of trans-aconitate. The protein is Trans-aconitate 2-methyltransferase of Shigella flexneri serotype 5b (strain 8401).